Here is a 149-residue protein sequence, read N- to C-terminus: MNTGGNNSLPPQTRGEVLFRDQQFFQKQIDSKIMQLLENYHNIIKISKVNDPLKNASEIYEMETRTSNMLNAGEGLLKIIEELKQNLILNDFSTMAEEVRIQNLVFHKENERTNKSIKLISEELSRSLKELEDEYYNSSYKLPPPSSSK.

It belongs to the Mediator complex subunit 22 family. Component of the Mediator complex.

The protein resides in the nucleus. Its function is as follows. Component of the Mediator complex, a coactivator involved in the regulated transcription of nearly all RNA polymerase II-dependent genes. Mediator functions as a bridge to convey information from gene-specific regulatory proteins to the basal RNA polymerase II transcription machinery. Mediator is recruited to promoters by direct interactions with regulatory proteins and serves as a scaffold for the assembly of a functional preinitiation complex with RNA polymerase II and the general transcription factors. This chain is Putative mediator of RNA polymerase II transcription subunit 22 (med22), found in Dictyostelium discoideum (Social amoeba).